A 303-amino-acid polypeptide reads, in one-letter code: MKTEGLHHVTAFARDPQENLRFYTEVLGLRLVKKTVNFDDPGTYHFYFGNQNGDPGTIMTFFPFQGSGQGTVGKGQAGRVYFSVPSGSLSFWKERLEKSGLSLEEKTLFGEKGLIFDDTEDLPLAIMEDAKSGKSEWTPDGITTNEAITGMKGVLLYSYDPQATIQLLTESFGYTKVAEEDQIVRLASSAAVGGVIDVHLHPEKRGVGGYGTVHHVAFRTKKKEQAKWLPIIAENHLPSSEILDREYFTSVYFREKGGILFEIATDEPGFMTDETFAELGTSLKLPEWLEKHRQQITDILPEL.

VOC domains lie at 5-129 and 150-266; these read GLHH…IMED and GMKG…IATD. 3 residues coordinate Fe cation: His-8, His-215, and Glu-262.

It belongs to the extradiol ring-cleavage dioxygenase family. The cofactor is Fe(2+).

The protein resides in the cytoplasm. Its function is as follows. Putative ring-cleavage dioxygenase that may contribute to the degradation of aromatic compounds. This is Putative ring-cleaving dioxygenase MhqE (mhqE) from Bacillus subtilis (strain 168).